A 232-amino-acid chain; its full sequence is 5'-methylthioadenosine/S-adenosylhomocysteine nucleosidase (232 aa).

Catalysis depends on E12, which acts as the Proton acceptor. Substrate is bound by residues G78, I152, and 173–174; that span reads ME. Catalysis depends on D197, which acts as the Proton donor.

Belongs to the PNP/UDP phosphorylase family. MtnN subfamily. In terms of assembly, homodimer.

It catalyses the reaction S-adenosyl-L-homocysteine + H2O = S-(5-deoxy-D-ribos-5-yl)-L-homocysteine + adenine. The enzyme catalyses S-methyl-5'-thioadenosine + H2O = 5-(methylsulfanyl)-D-ribose + adenine. The catalysed reaction is 5'-deoxyadenosine + H2O = 5-deoxy-D-ribose + adenine. Its pathway is amino-acid biosynthesis; L-methionine biosynthesis via salvage pathway; S-methyl-5-thio-alpha-D-ribose 1-phosphate from S-methyl-5'-thioadenosine (hydrolase route): step 1/2. Catalyzes the irreversible cleavage of the glycosidic bond in both 5'-methylthioadenosine (MTA) and S-adenosylhomocysteine (SAH/AdoHcy) to adenine and the corresponding thioribose, 5'-methylthioribose and S-ribosylhomocysteine, respectively. Also cleaves 5'-deoxyadenosine, a toxic by-product of radical S-adenosylmethionine (SAM) enzymes, into 5-deoxyribose and adenine. Thus, is required for in vivo function of the radical SAM enzymes biotin synthase and lipoic acid synthase, that are inhibited by 5'-deoxyadenosine accumulation. The chain is 5'-methylthioadenosine/S-adenosylhomocysteine nucleosidase from Enterobacter sp. (strain 638).